Reading from the N-terminus, the 259-residue chain is Undecaprenyl-diphosphatase 3 (259 aa).

8 consecutive transmembrane segments (helical) span residues 1 to 21 (MNWL…FLPI), 39 to 59 (AGLF…FIYY), 71 to 91 (FSKL…IGLL), 99 to 119 (ISKT…FLYM), 133 to 153 (ITYK…FPAI), 174 to 194 (AYFS…LQFV), 208 to 228 (SLIV…SWMI), and 236 to 256 (LKVF…LQFT).

This sequence belongs to the UppP family.

It localises to the cell membrane. It carries out the reaction di-trans,octa-cis-undecaprenyl diphosphate + H2O = di-trans,octa-cis-undecaprenyl phosphate + phosphate + H(+). Functionally, catalyzes the dephosphorylation of undecaprenyl diphosphate (UPP). Confers resistance to bacitracin. The chain is Undecaprenyl-diphosphatase 3 from Bacillus cereus (strain ATCC 10987 / NRS 248).